The chain runs to 498 residues: ATP synthase subunit alpha 1 (498 aa).

This sequence belongs to the ATPase alpha/beta chains family. As to quaternary structure, F-type ATPases have 2 components, CF(1) - the catalytic core - and CF(0) - the membrane proton channel. CF(1) has five subunits: alpha(3), beta(3), gamma(1), delta(1), epsilon(1). CF(0) has three main subunits: a(1), b(2) and c(9-12). The alpha and beta chains form an alternating ring which encloses part of the gamma chain. CF(1) is attached to CF(0) by a central stalk formed by the gamma and epsilon chains, while a peripheral stalk is formed by the delta and b chains.

It localises to the cell membrane. It catalyses the reaction ATP + H2O + 4 H(+)(in) = ADP + phosphate + 5 H(+)(out). Produces ATP from ADP in the presence of a proton gradient across the membrane. The alpha chain is a regulatory subunit. The protein is ATP synthase subunit alpha 1 of Listeria monocytogenes serovar 1/2a (strain ATCC BAA-679 / EGD-e).